Here is a 483-residue protein sequence, read N- to C-terminus: Regulatory protein ViaA (483 aa).

It belongs to the ViaA family. Homodimer. Interacts with RavA.

The protein localises to the cytoplasm. In terms of biological role, component of the RavA-ViaA chaperone complex, which may act on the membrane to optimize the function of some of the respiratory chains. ViaA stimulates the ATPase activity of RavA. This is Regulatory protein ViaA from Escherichia coli O7:K1 (strain IAI39 / ExPEC).